The primary structure comprises 659 residues: Tetratricopeptide repeat protein 30 homolog (659 aa).

TPR repeat units follow at residues 3 to 36 (SQNM…LNGI), 43 to 76 (RAGL…VPDV), 143 to 176 (ATVK…GGFN), 178 to 210 (HIAY…GIRN), 391 to 424 (CRSA…RAWI), 450 to 483 (TWRL…NYDD), and 533 to 566 (CIVN…GSGA).

It belongs to the TTC30/dfy-1/fleer family.

The protein localises to the cell projection. It localises to the cilium. Its function is as follows. Required for polyglutamylation of axonemal tubulin in sensory cilia. Plays a role in anterograde intraflagellar transport (IFT), the process by which cilia precursors are transported from the base of the cilium to the site of their incorporation at the tip. The polypeptide is Tetratricopeptide repeat protein 30 homolog (Aedes aegypti (Yellowfever mosquito)).